A 254-amino-acid polypeptide reads, in one-letter code: Pyridoxine 5'-phosphate synthase (254 aa).

A 3-amino-2-oxopropyl phosphate-binding site is contributed by Asn8. 10 to 11 (DH) lines the 1-deoxy-D-xylulose 5-phosphate pocket. Arg19 is a 3-amino-2-oxopropyl phosphate binding site. His44 (proton acceptor) is an active-site residue. Residues Arg46 and His51 each contribute to the 1-deoxy-D-xylulose 5-phosphate site. The active-site Proton acceptor is the Glu74. Residue Thr104 coordinates 1-deoxy-D-xylulose 5-phosphate. His198 functions as the Proton donor in the catalytic mechanism. Residues Gly199 and 220–221 (GH) each bind 3-amino-2-oxopropyl phosphate.

It belongs to the PNP synthase family. As to quaternary structure, homooctamer; tetramer of dimers.

The protein resides in the cytoplasm. The catalysed reaction is 3-amino-2-oxopropyl phosphate + 1-deoxy-D-xylulose 5-phosphate = pyridoxine 5'-phosphate + phosphate + 2 H2O + H(+). It participates in cofactor biosynthesis; pyridoxine 5'-phosphate biosynthesis; pyridoxine 5'-phosphate from D-erythrose 4-phosphate: step 5/5. Its function is as follows. Catalyzes the complicated ring closure reaction between the two acyclic compounds 1-deoxy-D-xylulose-5-phosphate (DXP) and 3-amino-2-oxopropyl phosphate (1-amino-acetone-3-phosphate or AAP) to form pyridoxine 5'-phosphate (PNP) and inorganic phosphate. The chain is Pyridoxine 5'-phosphate synthase from Caulobacter vibrioides (strain ATCC 19089 / CIP 103742 / CB 15) (Caulobacter crescentus).